Reading from the N-terminus, the 258-residue chain is Electron transfer flavoprotein beta subunit lysine methyltransferase (258 aa).

The protein belongs to the methyltransferase superfamily. ETFBKMT family.

The protein resides in the cytoplasm. The protein localises to the mitochondrion matrix. The enzyme catalyses L-lysyl-[protein] + 3 S-adenosyl-L-methionine = N(6),N(6),N(6)-trimethyl-L-lysyl-[protein] + 3 S-adenosyl-L-homocysteine + 3 H(+). In terms of biological role, protein-lysine methyltransferase that selectively trimethylates the flavoprotein ETFB in mitochondria. Thereby, may negatively regulate the function of ETFB in electron transfer from Acyl-CoA dehydrogenases to the main respiratory chain. This chain is Electron transfer flavoprotein beta subunit lysine methyltransferase, found in Danio rerio (Zebrafish).